Reading from the N-terminus, the 188-residue chain is MRIGVLSFQGGVIEHIHHIESLKAIPVEIKNKYELNNIDGIILPGGESTTMGKLLMDTDMLEPLREKILKGLPTWGTCAGMILLANSIENSNKSYLKVIDIKVRRNAYGSQIDSFYYETLIPDISSSKIPLVFIRAPFITYLGSNVKSLCSIKGNVVAARYKNILVTSFHPELTDDLSFHKYFLSTCR.

Position 46–48 (46–48 (GES)) interacts with L-glutamine. Cys-78 acts as the Nucleophile in catalysis. L-glutamine is bound by residues Arg-105 and 134-135 (IR). Residues His-170 and Glu-172 each act as charge relay system in the active site.

It belongs to the glutaminase PdxT/SNO family. In the presence of PdxS, forms a dodecamer of heterodimers. Only shows activity in the heterodimer.

It catalyses the reaction aldehydo-D-ribose 5-phosphate + D-glyceraldehyde 3-phosphate + L-glutamine = pyridoxal 5'-phosphate + L-glutamate + phosphate + 3 H2O + H(+). The enzyme catalyses L-glutamine + H2O = L-glutamate + NH4(+). The protein operates within cofactor biosynthesis; pyridoxal 5'-phosphate biosynthesis. Functionally, catalyzes the hydrolysis of glutamine to glutamate and ammonia as part of the biosynthesis of pyridoxal 5'-phosphate. The resulting ammonia molecule is channeled to the active site of PdxS. In Clostridium kluyveri (strain ATCC 8527 / DSM 555 / NBRC 12016 / NCIMB 10680 / K1), this protein is Pyridoxal 5'-phosphate synthase subunit PdxT.